The primary structure comprises 136 residues: Histone H3.2 (136 aa).

A disordered region spans residues 1–45; that stretch reads MARTKQTARKSTGGKAPRKQLATKAARKSAPATGGVKKPHRYRPG. R3 carries the asymmetric dimethylarginine; by PRMT6; alternate modification. R3 is modified (citrulline; alternate). Position 4 is a phosphothreonine; by HASPIN and VRK1 (T4). An Allysine; alternate modification is found at K5. N6,N6,N6-trimethyllysine; alternate is present on K5. K5 bears the N6,N6-dimethyllysine; alternate mark. The residue at position 5 (K5) is an N6-(2-hydroxyisobutyryl)lysine; alternate. K5 is modified (N6-(beta-hydroxybutyryl)lysine; alternate). N6-acetyllysine; alternate is present on K5. At K5 the chain carries N6-crotonyllysine; alternate. K5 carries the post-translational modification N6-methyllysine; alternate. Q6 bears the 5-glutamyl dopamine; alternate mark. Q6 bears the 5-glutamyl serotonin; alternate mark. T7 is subject to Phosphothreonine; by PKC. Residue R9 is modified to Citrulline; alternate. Residue R9 is modified to Symmetric dimethylarginine; by PRMT5; alternate. K10 is subject to N6,N6,N6-trimethyllysine; alternate. The residue at position 10 (K10) is an N6,N6-dimethyllysine; alternate. K10 is subject to N6-(2-hydroxyisobutyryl)lysine; alternate. Position 10 is an N6-(beta-hydroxybutyryl)lysine; alternate (K10). Residue K10 is modified to N6-acetyllysine; alternate. K10 is modified (N6-crotonyllysine; alternate). An N6-methyllysine; alternate modification is found at K10. An N6-lactoyllysine; alternate modification is found at K10. Residue S11 is modified to ADP-ribosylserine; alternate. S11 carries the post-translational modification Phosphoserine; alternate; by AURKB, AURKC, RPS6KA3, RPS6KA4 and RPS6KA5. Phosphothreonine; by PKC is present on T12. K15 carries the post-translational modification N6-(2-hydroxyisobutyryl)lysine; alternate. An N6-(beta-hydroxybutyryl)lysine; alternate modification is found at K15. Position 15 is an N6-acetyllysine; alternate (K15). K15 carries the N6-lactoyllysine; alternate modification. K15 carries the post-translational modification N6-glutaryllysine; alternate. Position 15 is an N6-succinyllysine; alternate (K15). R18 carries the citrulline; alternate modification. Residue R18 is modified to Asymmetric dimethylarginine; by CARM1; alternate. K19 and K24 each carry N6-(2-hydroxyisobutyryl)lysine; alternate. N6-(beta-hydroxybutyryl)lysine; alternate occurs at positions 19 and 24. N6-acetyllysine; alternate occurs at positions 19 and 24. N6-crotonyllysine; alternate occurs at positions 19 and 24. K19 and K24 each carry N6-methyllysine; alternate. An N6-lactoyllysine; alternate mark is found at K19 and K24. N6-glutaryllysine; alternate occurs at positions 19 and 24. Residues K19 and K24 each carry the N6-butyryllysine; alternate modification. K19 is lipidated: N6-decanoyllysine. Citrulline is present on R27. Position 28 is an N6,N6,N6-trimethyllysine; alternate (K28). Position 28 is an N6,N6-dimethyllysine; alternate (K28). K28 is subject to N6-(2-hydroxyisobutyryl)lysine; alternate. K28 carries the post-translational modification N6-acetyllysine; alternate. K28 carries the post-translational modification N6-crotonyllysine; alternate. An N6-methyllysine; alternate modification is found at K28. K28 is subject to N6-lactoyllysine; alternate. K28 bears the N6-glutaryllysine; alternate mark. S29 carries the post-translational modification ADP-ribosylserine; alternate. Residue S29 is modified to Phosphoserine; alternate; by AURKB, AURKC and RPS6KA5. At K37 the chain carries N6,N6,N6-trimethyllysine; alternate. Residue K37 is modified to N6,N6-dimethyllysine; alternate. K37 carries the N6-(2-hydroxyisobutyryl)lysine; alternate modification. An N6-acetyllysine; alternate modification is found at K37. N6-methyllysine; alternate is present on K37. An N6-methyllysine modification is found at K38. Y42 carries the phosphotyrosine modification. The residue at position 57 (K57) is an N6,N6,N6-trimethyllysine; alternate. K57 is subject to N6-(2-hydroxyisobutyryl)lysine; alternate. K57 is subject to N6-(beta-hydroxybutyryl)lysine; alternate. K57 is subject to N6-acetyllysine; alternate. An N6-crotonyllysine; alternate modification is found at K57. The residue at position 57 (K57) is an N6-lactoyllysine; alternate. The residue at position 57 (K57) is an N6-glutaryllysine; alternate. N6-succinyllysine; alternate is present on K57. An N6-methyllysine; by EHMT2; alternate modification is found at K57. S58 is subject to Phosphoserine. N6-(2-hydroxyisobutyryl)lysine; alternate occurs at positions 65 and 80. An N6-methyllysine; alternate mark is found at K65 and K80. Residue K80 is modified to N6,N6,N6-trimethyllysine; alternate. Position 80 is an N6,N6-dimethyllysine; alternate (K80). K80 carries the post-translational modification N6-acetyllysine; alternate. The residue at position 80 (K80) is an N6-lactoyllysine; alternate. Position 80 is an N6-glutaryllysine; alternate (K80). An N6-succinyllysine; alternate modification is found at K80. A Phosphothreonine modification is found at T81. S87 carries the post-translational modification Phosphoserine. T108 carries the phosphothreonine modification. Residue C111 is the site of S-palmitoyl cysteine attachment. N6-acetyllysine; alternate occurs at positions 116 and 123. N6-glutaryllysine; alternate occurs at positions 116 and 123. Residue K123 is modified to N6-(2-hydroxyisobutyryl)lysine; alternate. K123 bears the N6-methyllysine; alternate mark. K123 carries the N6-succinyllysine; alternate modification.

It belongs to the histone H3 family. The nucleosome is a histone octamer containing two molecules each of H2A, H2B, H3 and H4 assembled in one H3-H4 heterotetramer and two H2A-H2B heterodimers. The octamer wraps approximately 147 bp of DNA. During nucleosome assembly the chaperone ASF1A interacts with the histone H3-H4 heterodimer (via C-terminus of H3); this interaction is direct. Interacts with DNAJC9, CHAF1A and CHAF1B. Interacts with NASP; NASP is a histone chaperone that stabilizes and maintains a soluble pool of Histone H3-H4 dimers. Post-translationally, acetylation is generally linked to gene activation. Acetylation on Lys-10 (H3K9ac) impairs methylation at Arg-9 (H3R8me2s). Acetylation on Lys-19 (H3K18ac) and Lys-24 (H3K24ac) favors methylation at Arg-18 (H3R17me). Acetylation at Lys-123 (H3K122ac) by EP300/p300 plays a central role in chromatin structure: localizes at the surface of the histone octamer and stimulates transcription, possibly by promoting nucleosome instability. In terms of processing, citrullination at Arg-9 (H3R8ci) and/or Arg-18 (H3R17ci) by PADI4 impairs methylation and represses transcription. Asymmetric dimethylation at Arg-18 (H3R17me2a) by CARM1 is linked to gene activation. Symmetric dimethylation at Arg-9 (H3R8me2s) by PRMT5 is linked to gene repression. Asymmetric dimethylation at Arg-3 (H3R2me2a) by PRMT6 is linked to gene repression and is mutually exclusive with H3 Lys-5 methylation (H3K4me2 and H3K4me3). H3R2me2a is present at the 3' of genes regardless of their transcription state and is enriched on inactive promoters, while it is absent on active promoters. Post-translationally, methylation at Lys-5 (H3K4me), Lys-37 (H3K36me) and Lys-80 (H3K79me) are linked to gene activation. Methylation at Lys-5 (H3K4me) facilitates subsequent acetylation of H3 and H4. Methylation at Lys-80 (H3K79me) is associated with DNA double-strand break (DSB) responses and is a specific target for TP53BP1. Methylation at Lys-10 (H3K9me) and Lys-28 (H3K27me) are linked to gene repression. Methylation at Lys-10 (H3K9me) is a specific target for HP1 proteins (CBX1, CBX3 and CBX5) and prevents subsequent phosphorylation at Ser-11 (H3S10ph) and acetylation of H3 and H4. Methylation at Lys-5 (H3K4me) and Lys-80 (H3K79me) require preliminary monoubiquitination of H2B at 'Lys-120'. Methylation at Lys-10 (H3K9me) and Lys-28 (H3K27me) are enriched in inactive X chromosome chromatin. Monomethylation at Lys-57 (H3K56me1) by EHMT2/G9A in G1 phase promotes interaction with PCNA and is required for DNA replication. In terms of processing, phosphorylated at Thr-4 (H3T3ph) by VRK1. Phosphorylated at Thr-4 (H3T3ph) by HASPIN during prophase and dephosphorylated during anaphase. Phosphorylation at Ser-11 (H3S10ph) by AURKB is crucial for chromosome condensation and cell-cycle progression during mitosis and meiosis. In addition phosphorylation at Ser-11 (H3S10ph) by RPS6KA4 and RPS6KA5 is important during interphase because it enables the transcription of genes following external stimulation, like mitogens, stress, growth factors or UV irradiation and result in the activation of genes, such as c-fos and c-jun. Phosphorylation at Ser-11 (H3S10ph), which is linked to gene activation, prevents methylation at Lys-10 (H3K9me) but facilitates acetylation of H3 and H4. Phosphorylation at Ser-11 (H3S10ph) by AURKB mediates the dissociation of HP1 proteins (CBX1, CBX3 and CBX5) from heterochromatin. Phosphorylation at Ser-11 (H3S10ph) is also an essential regulatory mechanism for neoplastic cell transformation. Phosphorylated at Ser-29 (H3S28ph) by MAP3K20 isoform 1, RPS6KA5 or AURKB during mitosis or upon ultraviolet B irradiation. Phosphorylation at Thr-7 (H3T6ph) by PRKCB is a specific tag for epigenetic transcriptional activation that prevents demethylation of Lys-5 (H3K4me) by LSD1/KDM1A. At centromeres, specifically phosphorylated at Thr-12 (H3T11ph) from prophase to early anaphase, by DAPK3 and PKN1. Phosphorylation at Thr-12 (H3T11ph) by PKN1 or isoform M2 of PKM (PKM2) is a specific tag for epigenetic transcriptional activation that promotes demethylation of Lys-10 (H3K9me) by KDM4C/JMJD2C. Phosphorylation at Tyr-42 (H3Y41ph) by JAK2 promotes exclusion of CBX5 (HP1 alpha) from chromatin. Monoubiquitinated by RAG1 in lymphoid cells, monoubiquitination is required for V(D)J recombination. Ubiquitinated by the CUL4-DDB-RBX1 complex in response to ultraviolet irradiation. This may weaken the interaction between histones and DNA and facilitate DNA accessibility to repair proteins. Post-translationally, lysine deamination at Lys-5 (H3K4all) to form allysine is mediated by LOXL2. Allysine formation by LOXL2 only takes place on H3K4me3 and results in gene repression. In terms of processing, crotonylation (Kcr) is specifically present in male germ cells and marks testis-specific genes in post-meiotic cells, including X-linked genes that escape sex chromosome inactivation in haploid cells. Crotonylation marks active promoters and enhancers and confers resistance to transcriptional repressors. It is also associated with post-meiotically activated genes on autosomes. Butyrylation of histones marks active promoters and competes with histone acetylation. It is present during late spermatogenesis. Post-translationally, succinylation at Lys-80 (H3K79succ) by KAT2A takes place with a maximum frequency around the transcription start sites of genes. It gives a specific tag for epigenetic transcription activation. Desuccinylation at Lys-123 (H3K122succ) by SIRT7 in response to DNA damage promotes chromatin condensation and double-strand breaks (DSBs) repair. In terms of processing, serine ADP-ribosylation by PARP1 or PARP2 constitutes the primary form of ADP-ribosylation of proteins in response to DNA damage. Serine ADP-ribosylation at Ser-11 (H3S10ADPr) promotes recruitment of CHD1L. H3S10ADPr is mutually exclusive with phosphorylation at Ser-11 (H3S10ph) and impairs acetylation at Lys-10 (H3K9ac). Serotonylated by TGM2 at Gln-6 (H3Q5ser) during serotonergic neuron differentiation. H3Q5ser is associated with trimethylation of Lys-5 (H3K4me3) and enhances general transcription factor IID (TFIID) complex-binding to H3K4me3, thereby facilitating transcription. Post-translationally, dopaminylated by TGM2 at Gln-6 (H3Q5dop) in ventral tegmental area (VTA) neurons. H3Q5dop mediates neurotransmission-independent role of nuclear dopamine by regulating relapse-related transcriptional plasticity in the reward system. In terms of processing, lactylated in macrophages by EP300/P300 by using lactoyl-CoA directly derived from endogenous or exogenous lactate, leading to stimulates gene transcription.

The protein resides in the nucleus. Its subcellular location is the chromosome. Functionally, core component of nucleosome. Nucleosomes wrap and compact DNA into chromatin, limiting DNA accessibility to the cellular machineries which require DNA as a template. Histones thereby play a central role in transcription regulation, DNA repair, DNA replication and chromosomal stability. DNA accessibility is regulated via a complex set of post-translational modifications of histones, also called histone code, and nucleosome remodeling. The chain is Histone H3.2 from Cricetulus longicaudatus (Long-tailed dwarf hamster).